Consider the following 476-residue polypeptide: Aspartyl/glutamyl-tRNA(Asn/Gln) amidotransferase subunit B (476 aa).

The protein belongs to the GatB/GatE family. GatB subfamily. Heterotrimer of A, B and C subunits.

It catalyses the reaction L-glutamyl-tRNA(Gln) + L-glutamine + ATP + H2O = L-glutaminyl-tRNA(Gln) + L-glutamate + ADP + phosphate + H(+). The catalysed reaction is L-aspartyl-tRNA(Asn) + L-glutamine + ATP + H2O = L-asparaginyl-tRNA(Asn) + L-glutamate + ADP + phosphate + 2 H(+). Allows the formation of correctly charged Asn-tRNA(Asn) or Gln-tRNA(Gln) through the transamidation of misacylated Asp-tRNA(Asn) or Glu-tRNA(Gln) in organisms which lack either or both of asparaginyl-tRNA or glutaminyl-tRNA synthetases. The reaction takes place in the presence of glutamine and ATP through an activated phospho-Asp-tRNA(Asn) or phospho-Glu-tRNA(Gln). This is Aspartyl/glutamyl-tRNA(Asn/Gln) amidotransferase subunit B from Lacticaseibacillus paracasei (strain ATCC 334 / BCRC 17002 / CCUG 31169 / CIP 107868 / KCTC 3260 / NRRL B-441) (Lactobacillus paracasei).